The chain runs to 546 residues: Probable lysosomal cobalamin transporter (546 aa).

The next 4 helical transmembrane spans lie at 8-28, 48-68, 102-122, and 141-161; these read LAQGWIPFTVVVVLAILFSWF, IIALFIALMTTALVPVDIFLV, ILYALLAFFVFVIIPFMYFFF, and YSIGFLIVASVLLLVGAFAPL. N-linked (GlcNAc...) asparagine glycosylation occurs at Asn167. Helical transmembrane passes span 189-209, 304-324, 352-372, and 407-427; these read TALSLLIGFLTLIGMLIMITY, MVFGAFFLLVALLIFVSLFIT, IIMVYAQIVFPLDYCLFLLVV, and ALLFMCVMLMLIVLSLNVMLF. N-linked (GlcNAc...) asparagine glycosylation is found at Asn444, Asn452, and Asn459. Residues 495–515 form a helical membrane-spanning segment; the sequence is VWFFGACYYWGTWLFLVVFMT.

It belongs to the LIMR family. LMBRD1 subfamily.

The protein localises to the lysosome membrane. Probable lysosomal cobalamin transporter. Required to export cobalamin from lysosomes allowing its conversion to cofactors. The sequence is that of Probable lysosomal cobalamin transporter from Nematostella vectensis (Starlet sea anemone).